Reading from the N-terminus, the 229-residue chain is Uracil-DNA glycosylase (229 aa).

Asp-64 (proton acceptor) is an active-site residue.

It belongs to the uracil-DNA glycosylase (UDG) superfamily. UNG family. In terms of assembly, monomer.

The protein localises to the cytoplasm. The catalysed reaction is Hydrolyzes single-stranded DNA or mismatched double-stranded DNA and polynucleotides, releasing free uracil.. In terms of biological role, excises uracil residues from the DNA which can arise as a result of misincorporation of dUMP residues by DNA polymerase or due to deamination of cytosine. This is Uracil-DNA glycosylase from Escherichia coli O157:H7.